We begin with the raw amino-acid sequence, 358 residues long: Alanine racemase (358 aa).

The active-site Proton acceptor; specific for D-alanine is Lys-34. Residue Lys-34 is modified to N6-(pyridoxal phosphate)lysine. A substrate-binding site is contributed by Arg-130. The active-site Proton acceptor; specific for L-alanine is Tyr-254. Met-302 lines the substrate pocket.

The protein belongs to the alanine racemase family. Requires pyridoxal 5'-phosphate as cofactor.

The catalysed reaction is L-alanine = D-alanine. The protein operates within amino-acid biosynthesis; D-alanine biosynthesis; D-alanine from L-alanine: step 1/1. Functionally, catalyzes the interconversion of L-alanine and D-alanine. May also act on other amino acids. This Stutzerimonas stutzeri (strain A1501) (Pseudomonas stutzeri) protein is Alanine racemase (alr).